The following is a 425-amino-acid chain: UPF0597 protein VFMJ11_0655 (425 aa).

Belongs to the UPF0597 family.

The chain is UPF0597 protein VFMJ11_0655 from Aliivibrio fischeri (strain MJ11) (Vibrio fischeri).